The sequence spans 146 residues: 3-hydroxyacyl-[acyl-carrier-protein] dehydratase FabZ (146 aa).

The active site involves histidine 49.

It belongs to the thioester dehydratase family. FabZ subfamily.

The protein resides in the cytoplasm. It carries out the reaction a (3R)-hydroxyacyl-[ACP] = a (2E)-enoyl-[ACP] + H2O. Its function is as follows. Involved in unsaturated fatty acids biosynthesis. Catalyzes the dehydration of short chain beta-hydroxyacyl-ACPs and long chain saturated and unsaturated beta-hydroxyacyl-ACPs. This is 3-hydroxyacyl-[acyl-carrier-protein] dehydratase FabZ from Psychrobacter arcticus (strain DSM 17307 / VKM B-2377 / 273-4).